Consider the following 144-residue polypeptide: Methylglyoxal synthase (144 aa).

In terms of domain architecture, MGS-like spans 1 to 144 (MKIALIAHDE…KSGEEKETER (144 aa)). Residues H8, K12, 34–37 (TGTT), and 54–55 (SG) contribute to the substrate site. D60 acts as the Proton donor/acceptor in catalysis. A substrate-binding site is contributed by H87.

Belongs to the methylglyoxal synthase family.

The enzyme catalyses dihydroxyacetone phosphate = methylglyoxal + phosphate. Its function is as follows. Catalyzes the formation of methylglyoxal from dihydroxyacetone phosphate. In Geobacillus thermodenitrificans (strain NG80-2), this protein is Methylglyoxal synthase.